The chain runs to 227 residues: Cytochrome c oxidase subunit 2 (227 aa).

Over 1–14 (MAYPFQLGLQDATS) the chain is Mitochondrial intermembrane. A helical membrane pass occupies residues 15–45 (PIMEELTNFHDHTLMIVFLISSLVLYIISLM). The Mitochondrial matrix segment spans residues 46 to 59 (LTTKLTHTSTMDAQ). A helical transmembrane segment spans residues 60 to 87 (EVETIWTILPAVILILIALPSLRILYMM). Over 88–227 (DEINNPVLTV…YFENWSASMI (140 aa)) the chain is Mitochondrial intermembrane. Cu cation is bound by residues His-161, Cys-196, Glu-198, Cys-200, His-204, and Met-207. Glu-198 is a Mg(2+) binding site. Tyr-218 is subject to Phosphotyrosine.

The protein belongs to the cytochrome c oxidase subunit 2 family. As to quaternary structure, component of the cytochrome c oxidase (complex IV, CIV), a multisubunit enzyme composed of 14 subunits. The complex is composed of a catalytic core of 3 subunits MT-CO1, MT-CO2 and MT-CO3, encoded in the mitochondrial DNA, and 11 supernumerary subunits COX4I, COX5A, COX5B, COX6A, COX6B, COX6C, COX7A, COX7B, COX7C, COX8 and NDUFA4, which are encoded in the nuclear genome. The complex exists as a monomer or a dimer and forms supercomplexes (SCs) in the inner mitochondrial membrane with NADH-ubiquinone oxidoreductase (complex I, CI) and ubiquinol-cytochrome c oxidoreductase (cytochrome b-c1 complex, complex III, CIII), resulting in different assemblies (supercomplex SCI(1)III(2)IV(1) and megacomplex MCI(2)III(2)IV(2)). Found in a complex with TMEM177, COA6, COX18, COX20, SCO1 and SCO2. Interacts with TMEM177 in a COX20-dependent manner. Interacts with COX20. Interacts with COX16. Cu cation serves as cofactor.

It is found in the mitochondrion inner membrane. The enzyme catalyses 4 Fe(II)-[cytochrome c] + O2 + 8 H(+)(in) = 4 Fe(III)-[cytochrome c] + 2 H2O + 4 H(+)(out). Functionally, component of the cytochrome c oxidase, the last enzyme in the mitochondrial electron transport chain which drives oxidative phosphorylation. The respiratory chain contains 3 multisubunit complexes succinate dehydrogenase (complex II, CII), ubiquinol-cytochrome c oxidoreductase (cytochrome b-c1 complex, complex III, CIII) and cytochrome c oxidase (complex IV, CIV), that cooperate to transfer electrons derived from NADH and succinate to molecular oxygen, creating an electrochemical gradient over the inner membrane that drives transmembrane transport and the ATP synthase. Cytochrome c oxidase is the component of the respiratory chain that catalyzes the reduction of oxygen to water. Electrons originating from reduced cytochrome c in the intermembrane space (IMS) are transferred via the dinuclear copper A center (CU(A)) of subunit 2 and heme A of subunit 1 to the active site in subunit 1, a binuclear center (BNC) formed by heme A3 and copper B (CU(B)). The BNC reduces molecular oxygen to 2 water molecules using 4 electrons from cytochrome c in the IMS and 4 protons from the mitochondrial matrix. In Rattus norvegicus (Rat), this protein is Cytochrome c oxidase subunit 2.